We begin with the raw amino-acid sequence, 180 residues long: ATP-dependent protease subunit HslV (180 aa).

The active site involves T5. G165, C168, and T171 together coordinate Na(+).

This sequence belongs to the peptidase T1B family. HslV subfamily. As to quaternary structure, a double ring-shaped homohexamer of HslV is capped on each side by a ring-shaped HslU homohexamer. The assembly of the HslU/HslV complex is dependent on binding of ATP.

The protein resides in the cytoplasm. It carries out the reaction ATP-dependent cleavage of peptide bonds with broad specificity.. With respect to regulation, allosterically activated by HslU binding. Functionally, protease subunit of a proteasome-like degradation complex believed to be a general protein degrading machinery. The chain is ATP-dependent protease subunit HslV from Helicobacter pylori (strain J99 / ATCC 700824) (Campylobacter pylori J99).